Here is a 214-residue protein sequence, read N- to C-terminus: Immunoglobulin lambda-like polypeptide 5 (214 aa).

The signal sequence occupies residues 1 to 35 (MRPKTGQVGCETPEELGPGPRQRWPLLLLGLAMVA). Residues 98 to 109 (VFGTGTKVTVLG) are j region. A c region region spans residues 110–214 (QPKANPTVTL…EKTVAPTECS (105 aa)). Residues 115–209 (PTVTLFPPSS…EGSTVEKTVA (95 aa)) form the Ig-like C1-type domain. Cys-136 and Cys-195 form a disulfide bridge.

Contrary to IGLL1, not expressed in pre-B-cells.

It is found in the secreted. This Homo sapiens (Human) protein is Immunoglobulin lambda-like polypeptide 5 (IGLL5).